The sequence spans 281 residues: Nucleoid occlusion protein (281 aa).

Positions 1 to 26 (MKHPFSRLFSFGEKEQEEAGGKQERE) are disordered. Residues 12–26 (GEKEQEEAGGKQERE) are compositionally biased toward basic and acidic residues. Residues 145 to 164 (EALAQRLGKGQSTIANKLRL) constitute a DNA-binding region (H-T-H motif).

It belongs to the ParB family.

Its subcellular location is the cytoplasm. It localises to the nucleoid. Effects nucleoid occlusion by binding relatively nonspecifically to DNA and preventing the assembly of the division machinery in the vicinity of the nucleoid, especially under conditions that disturb the cell cycle. It helps to coordinate cell division and chromosome segregation by preventing the formation of the Z ring through the nucleoid, which would cause chromosome breakage. This chain is Nucleoid occlusion protein, found in Geobacillus thermodenitrificans (strain NG80-2).